Here is a 650-residue protein sequence, read N- to C-terminus: Kinesin-like protein KIF22-B (650 aa).

In terms of domain architecture, Kinesin motor spans 31 to 359 (RVRVAVRLRP…LNFAAKSKQI (329 aa)). An ATP-binding site is contributed by 116-123 (GPTGAGKT). The disordered stretch occupies residues 365–416 (SRETTQTVAQPAMKRPREEAEATTSSRQRKKSKTDSTESSPNSSMESTGKRK). The span at 401–411 (TESSPNSSMES) shows a compositional bias: low complexity. A coiled-coil region spans residues 452–498 (KRERMALLKKWEESQMEIERLKEKQKELEQKAMEAEARLEKSNNSDL). An Important for regulated proteolytic degradation motif is present at residues 560 to 563 (GHEN).

It belongs to the TRAFAC class myosin-kinesin ATPase superfamily. Kinesin family. Post-translationally, ubiquitinated, leading to its subsequent proteasomal degradation.

The protein localises to the nucleus. It is found in the cytoplasm. It localises to the cytoskeleton. Its function is as follows. Kinesin family member that is involved in spindle formation and the movements of chromosomes during mitosis and meiosis. Binds to microtubules and to DNA. In Xenopus laevis (African clawed frog), this protein is Kinesin-like protein KIF22-B (kif22-b).